The sequence spans 190 residues: Guanylate kinase (190 aa).

The 183-residue stretch at 3–185 folds into the Guanylate kinase-like domain; the sequence is NYIFIVSAPS…SLEQFCKYFE (183 aa). Residue 10-17 coordinates ATP; the sequence is APSGAGKS.

The protein belongs to the guanylate kinase family.

Its subcellular location is the cytoplasm. The enzyme catalyses GMP + ATP = GDP + ADP. Functionally, essential for recycling GMP and indirectly, cGMP. The protein is Guanylate kinase of Francisella tularensis subsp. tularensis (strain FSC 198).